Here is a 57-residue protein sequence, read N- to C-terminus: MNVRGNQCIMSIRVFLKAGESSLSFAIKWLKRFEATTKKNQYIQNGWPLKDGNKKRK.

Functionally, proetin of unknown function whose overexpression causes growth inhibition. Overexpression increases the expression of ergosterol synthesis genes. This is an uncharacterized protein from Saccharomyces cerevisiae (strain ATCC 204508 / S288c) (Baker's yeast).